We begin with the raw amino-acid sequence, 251 residues long: Flagellar basal-body rod protein FlgF (251 aa).

Belongs to the flagella basal body rod proteins family. The basal body constitutes a major portion of the flagellar organelle and consists of five rings (E,L,P,S, and M) mounted on a central rod. The rod consists of about 26 subunits of FlgG in the distal portion, and FlgB, FlgC and FlgF are thought to build up the proximal portion of the rod with about 6 subunits each.

It localises to the bacterial flagellum basal body. In Salmonella typhimurium (strain LT2 / SGSC1412 / ATCC 700720), this protein is Flagellar basal-body rod protein FlgF (flgF).